A 177-amino-acid chain; its full sequence is SPbeta prophage-derived uncharacterized N-acetyltransferase YokL (177 aa).

The 160-residue stretch at 11–170 folds into the N-acetyltransferase domain; sequence LTLRAIQPED…DGICFGMTRE (160 aa).

Belongs to the acetyltransferase family.

The protein is SPbeta prophage-derived uncharacterized N-acetyltransferase YokL (yokL) of Bacillus subtilis (strain 168).